Here is a 316-residue protein sequence, read N- to C-terminus: Putative S-adenosyl-L-methionine-dependent methyltransferase MAB_4606c (316 aa).

Residues D137 and 166–167 each bind S-adenosyl-L-methionine; that span reads DL.

It belongs to the UPF0677 family.

Functionally, exhibits S-adenosyl-L-methionine-dependent methyltransferase activity. This chain is Putative S-adenosyl-L-methionine-dependent methyltransferase MAB_4606c, found in Mycobacteroides abscessus (strain ATCC 19977 / DSM 44196 / CCUG 20993 / CIP 104536 / JCM 13569 / NCTC 13031 / TMC 1543 / L948) (Mycobacterium abscessus).